Consider the following 932-residue polypeptide: Protein translocase subunit SecA (932 aa).

ATP contacts are provided by residues Gln-90, 108–112 (GEGKT), and Asp-498.

It belongs to the SecA family. Monomer and homodimer. Part of the essential Sec protein translocation apparatus which comprises SecA, SecYEG and auxiliary proteins SecDF. Other proteins may also be involved.

The protein localises to the cell inner membrane. Its subcellular location is the cellular thylakoid membrane. It localises to the cytoplasm. The enzyme catalyses ATP + H2O + cellular proteinSide 1 = ADP + phosphate + cellular proteinSide 2.. Part of the Sec protein translocase complex. Interacts with the SecYEG preprotein conducting channel. Has a central role in coupling the hydrolysis of ATP to the transfer of proteins into and across the cell membrane, serving as an ATP-driven molecular motor driving the stepwise translocation of polypeptide chains across the membrane. In terms of biological role, probably participates in protein translocation into and across both the cytoplasmic and thylakoid membranes in cyanobacterial cells. The polypeptide is Protein translocase subunit SecA (Synechocystis sp. (strain ATCC 27184 / PCC 6803 / Kazusa)).